The primary structure comprises 655 residues: p-hydroxybenzoic acid efflux pump subunit AaeB (655 aa).

A run of 11 helical transmembrane segments spans residues 13–33 (FAVK…HFQL), 38–58 (WAVL…GGEP), 69–89 (LRII…IAMI), 93–113 (LLMI…SSLV), 121–141 (WGLA…EPLL), 152–172 (EIVI…PRSI), 370–390 (LFWL…IAVV), 407–427 (FIYG…VIIP), 431–451 (QSML…GIEV), 459–479 (MGAL…TFHF), and 482–502 (FLDS…VILL).

Belongs to the aromatic acid exporter ArAE (TC 2.A.85) family.

The protein localises to the cell inner membrane. In terms of biological role, forms an efflux pump with AaeA. Could function as a metabolic relief valve, allowing to eliminate certain compounds when they accumulate to high levels in the cell. This Escherichia coli O6:K15:H31 (strain 536 / UPEC) protein is p-hydroxybenzoic acid efflux pump subunit AaeB.